Reading from the N-terminus, the 376-residue chain is Peroxisomal membrane protein PEX14 (376 aa).

A compositionally biased stretch (polar residues) spans 1–12; it reads MASSEQAEQPNQ. Positions 1–24 are disordered; that stretch reads MASSEQAEQPNQPSSPPGSENVVP. Ala2 carries the N-acetylalanine modification. The Peroxisomal portion of the chain corresponds to 2–108; it reads ASSEQAEQPN…YSPRGSRWRD (107 aa). Lys34 is subject to N6-acetyllysine. Positions 70-102 are disordered; the sequence is SGTAADEPSPLGPATPVVPVQPPHLTPQPYSPR. Pro residues predominate over residues 88 to 99; it reads PVQPPHLTPQPY. Residues 109 to 127 traverse the membrane as a helical segment; sequence YGALAIIMAGIAFGFHQLY. Residues 128–376 lie on the Cytoplasmic side of the membrane; sequence KRYLLPLILG…EGASNETERD (249 aa). The segment at 230 to 376 is disordered; it reads PPSPSAPKIP…EGASNETERD (147 aa). Residue Ser232 is modified to Phosphoserine. 2 stretches are compositionally biased toward low complexity: residues 247–259 and 265–275; these read SSSPSSPAAVNHH and SPVSNESTSSS. A phosphoserine mark is found at Ser282 and Ser334. The span at 323–341 shows a compositional bias: acidic residues; the sequence is KEDEDDEDDDVSHVDEEDV. Positions 359 to 376 are enriched in basic and acidic residues; the sequence is QVEKLRRPEGASNETERD.

Belongs to the peroxin-14 family. In terms of assembly, interacts with PEX13; forming the PEX13-PEX14 docking complex. Interacts with PEX5 (via WxxxF/Y motifs). Interacts with PEX19. Interacts with tubulin.

Its subcellular location is the peroxisome membrane. Its function is as follows. Component of the PEX13-PEX14 docking complex, a translocon channel that specifically mediates the import of peroxisomal cargo proteins bound to PEX5 receptor. The PEX13-PEX14 docking complex forms a large import pore which can be opened to a diameter of about 9 nm. Mechanistically, PEX5 receptor along with cargo proteins associates with the PEX14 subunit of the PEX13-PEX14 docking complex in the cytosol, leading to the insertion of the receptor into the organelle membrane with the concomitant translocation of the cargo into the peroxisome matrix. Plays a key role for peroxisome movement through a direct interaction with tubulin. This chain is Peroxisomal membrane protein PEX14, found in Mus musculus (Mouse).